Here is a 303-residue protein sequence, read N- to C-terminus: Coenzyme PQQ synthesis protein B (303 aa).

Belongs to the PqqB family.

It functions in the pathway cofactor biosynthesis; pyrroloquinoline quinone biosynthesis. In terms of biological role, may be involved in the transport of PQQ or its precursor to the periplasm. The protein is Coenzyme PQQ synthesis protein B of Acinetobacter baumannii (strain AB0057).